We begin with the raw amino-acid sequence, 61 residues long: Metallothionein-1C (61 aa).

The tract at residues 1-29 (MDPNCSCSTGSSCSCAGSCTCKACRCPSC) is beta. A divalent metal cation contacts are provided by C5, C7, C13, C15, C19, C21, C24, C26, C29, C33, C34, C36, C37, C41, C44, C48, C50, C57, C59, and C60. An alpha region spans residues 30 to 61 (KKSCCSCCPVGCAKCAQGCICKGASDKCSCCA).

This sequence belongs to the metallothionein superfamily. Type 1 family.

In terms of biological role, metallothioneins have a high content of cysteine residues that bind various heavy metals; these proteins are transcriptionally regulated by both heavy metals and glucocorticoids. This Ovis aries (Sheep) protein is Metallothionein-1C (MT1C).